We begin with the raw amino-acid sequence, 418 residues long: 6-methylpretetramide 4-monooxygenase (418 aa).

FAD-binding positions include 15 to 44 and 289 to 299; these read DVCVVGGGPAGLTLALLMLRSGARVTLVER and WARDGLLLIGD.

It belongs to the PheA/TfdB FAD monooxygenase family. FAD serves as cofactor.

It catalyses the reaction 6-methylpretetramide + NADPH + O2 + 2 H(+) = 4-hydroxy-6-methylpretetramide + NADP(+) + H2O. Its pathway is antibiotic biosynthesis; oxytetracycline biosynthesis. In terms of biological role, involved in the biosynthesis of the tetracycline antibiotic, oxytetracycline. Catalyzes the C-4 hydroxylation of 6-methylpretetramide to yield the intermediate 4-hydroxyl-6-methylpretetramid, which is subsequently hydroxylated by OxyL to yield 4-keto-anhydrotetracycline. OxyE serves as the ancillary enzyme to assist OxyL in the hydroxylation of C-4. The chain is 6-methylpretetramide 4-monooxygenase from Streptomyces rimosus.